The primary structure comprises 267 residues: Serine/threonine-protein kinase 1 (267 aa).

Positions 18–266 (IQNNVRLVDG…YETVIKHSFL (249 aa)) constitute a Protein kinase domain. ATP-binding positions include 24–32 (LVDGKFGKM) and Lys47. Asp134 serves as the catalytic Proton acceptor.

This sequence belongs to the protein kinase superfamily. Ser/Thr protein kinase family.

The catalysed reaction is L-seryl-[protein] + ATP = O-phospho-L-seryl-[protein] + ADP + H(+). It catalyses the reaction L-threonyl-[protein] + ATP = O-phospho-L-threonyl-[protein] + ADP + H(+). This chain is Serine/threonine-protein kinase 1 (PK1), found in Heliothis zea nuclear polyhedrosis virus (HzSNPV).